The following is a 480-amino-acid chain: Phenolic acid decarboxylase (480 aa).

Mn(2+) is bound by residues N163, H185, and E227. Prenylated FMN-binding positions include 163–168 and 184–185; these read NVGTYR and MH. The active-site Proton donor is the E278. The segment at 443–466 is disordered; it reads TTPVPPEPNPRETQLLDPPDGTEE.

It belongs to the UbiD family. YclC subfamily. As to quaternary structure, homohexamer. Prenylated FMN serves as cofactor. The cofactor is Mn(2+).

The catalysed reaction is 4-hydroxybenzoate + H(+) = phenol + CO2. It carries out the reaction 3,4-dihydroxybenzoate + H(+) = catechol + CO2. Its activity is regulated as follows. Inhibited by Zn(2+), (2,3,4)-trihydroxybenzoate and (3,4,5)-trihydroxybenzoate. Ammonium and rubidium ions decrease the activity of the carboxylation of 3,4-dihydroxybenzoate by about 20%. Its function is as follows. Involved in the non-oxidative decarboxylation and detoxification of phenolic derivatives under anaerobic conditions. Oxygen-sensitive phenolic acid decarboxylase that catalyzes the reversible decarboxylation of 4-hydroxybenzoate and 3,4-dihydroxybenzoate. The polypeptide is Phenolic acid decarboxylase (Sedimentibacter hydroxybenzoicus (Clostridium hydroxybenzoicum)).